The sequence spans 446 residues: N-succinylarginine dihydrolase (446 aa).

Residues 19–28 (AGLSFGNVAS), Asn-110, and 137–138 (HR) contribute to the substrate site. Glu-174 is a catalytic residue. Residue Arg-213 participates in substrate binding. Residue His-249 is part of the active site. Positions 251 and 364 each coordinate substrate. Cys-370 functions as the Nucleophile in the catalytic mechanism.

It belongs to the succinylarginine dihydrolase family. As to quaternary structure, homodimer.

The enzyme catalyses N(2)-succinyl-L-arginine + 2 H2O + 2 H(+) = N(2)-succinyl-L-ornithine + 2 NH4(+) + CO2. It functions in the pathway amino-acid degradation; L-arginine degradation via AST pathway; L-glutamate and succinate from L-arginine: step 2/5. Its function is as follows. Catalyzes the hydrolysis of N(2)-succinylarginine into N(2)-succinylornithine, ammonia and CO(2). This Burkholderia orbicola (strain MC0-3) protein is N-succinylarginine dihydrolase.